Reading from the N-terminus, the 245-residue chain is Dehydrogenase/reductase SDR family member 6 (245 aa).

NAD(+)-binding positions include 16–18, aspartate 37, and aspartate 58; that span reads QGI. Arginine 144 contributes to the substrate binding site. Catalysis depends on tyrosine 147, which acts as the Proton acceptor. NAD(+) contacts are provided by residues lysine 151 and 180 to 184; that span reads VDTPS. Substrate-binding residues include arginine 188 and arginine 205.

Belongs to the short-chain dehydrogenases/reductases (SDR) family. In terms of assembly, homotetramer.

Its subcellular location is the cytoplasm. The catalysed reaction is cis-4-hydroxy-L-proline + NAD(+) = 4-oxo-L-proline + NADH + H(+). The enzyme catalyses (R)-3-hydroxybutanoate + NAD(+) = acetoacetate + NADH + H(+). Its pathway is amino-acid metabolism. The protein operates within siderophore biosynthesis. Functionally, NAD(H)-dependent dehydrogenase/reductase with a preference for cyclic substrates. Catalyzes stereoselective conversion of 4-oxo-L-proline to cis-4-hydroxy-L-proline, likely a detoxification mechanism for ketoprolines. Mediates the formation of 2,5-dihydroxybenzoate (2,5-DHBA), a siderophore that chelates free cytoplasmic iron and associates with LCN2, thereby regulating iron transport and homeostasis while protecting cells against free radical-induced oxidative stress. The iron-siderophore complex is imported into mitochondria, providing an iron source for mitochondrial metabolic processes in particular heme synthesis. May act as a 3-hydroxybutyrate dehydrogenase. The polypeptide is Dehydrogenase/reductase SDR family member 6 (Rattus norvegicus (Rat)).